Here is a 220-residue protein sequence, read N- to C-terminus: UPF0319 protein YccT (220 aa).

The N-terminal stretch at 1-20 (MKTGALTTFLALCLPVTVFA) is a signal peptide.

It belongs to the UPF0319 family.

The protein is UPF0319 protein YccT of Salmonella schwarzengrund (strain CVM19633).